Reading from the N-terminus, the 401-residue chain is Methionyl-tRNA formyltransferase, mitochondrial (401 aa).

A mitochondrion-targeting transit peptide spans 1 to 26 (MVKMRRITPTRLLFTCRYISNNASPP). Residues 18–20 (YIS) and 66–70 (VVTRS) each bind (6R)-10-formyltetrahydrofolate.

This sequence belongs to the Fmt family. Post-translationally, phosphorylated by GCN2 in response to nutrient deprivation. Phosphorylation mediates retention of FMT1 in the cytoplasm.

It is found in the mitochondrion. It localises to the mitochondrion matrix. Its subcellular location is the cytoplasm. It carries out the reaction L-methionyl-tRNA(fMet) + (6R)-10-formyltetrahydrofolate = N-formyl-L-methionyl-tRNA(fMet) + (6S)-5,6,7,8-tetrahydrofolate + H(+). Its function is as follows. Formylates methionyl-tRNA in mitochondria and the cytoplasm. Responsible for the formylation of the 8 N-terminally formylated (Nt-formylated) mitochondrial matrix proteins that are encoded by mitochondrial DNA. Nt-formylated proteins in the cytoplasm are strongly up-regulated in stationary phase or upon starvation for specific amino acids (His or Lys) and are targeted for degradation by a PSH1 E3 ubiquitin ligase-mediated fMet/N-end rule pathway. Increased Nt-formylation of cytosolic proteins appears to be important for adaptation to these stresses. Stationary phase-degraded Nt-formylated proteins include histone H3-like centromeric protein CSE4, Mediator complex subunit 3 (PGD1) and small ribosomal subunit protein uS8-A (RPS22A). In Saccharomyces cerevisiae (strain ATCC 204508 / S288c) (Baker's yeast), this protein is Methionyl-tRNA formyltransferase, mitochondrial (FMT1).